The primary structure comprises 138 residues: Phospholipase A2 crotoxin basic chain CBa2 (138 aa).

An N-terminal signal peptide occupies residues 1–16 (MRALWIVAVLLVGVEG). 7 cysteine pairs are disulfide-bonded: C42/C131, C44/C60, C59/C111, C65/C138, C66/C104, C73/C97, and C91/C102. Ca(2+) is bound by residues Y43, G45, and G47. The active site involves H63. D64 serves as a coordination point for Ca(2+). D105 is a catalytic residue.

The protein belongs to the phospholipase A2 family. Group II subfamily. D49 sub-subfamily. In terms of assembly, heterodimer of one of the acidic (CA1, CA2, CA3 or CA4) and one of the basic (CBa1, CBa2, CBb, CBc or CBd) subunits; non-covalently linked. The acidic subunit is non-toxic, without enzymatic activity and comprises 3 peptides that are cross-linked by 5 disulfide bridges. The basic subunit is toxic, has phospholipase A2 activity and is composed of a single chain. Multiple variants of each subunit give different crotoxin complexes that can be subdivided into 2 classes: (1) those of high toxicity, low PLA2 activity (CBb, CBc and CBd linked with high affinity to any CA) and high stability (K(d)=4.5 nM) and (2) those of moderate toxicity, high PLA2 activity (CBa2 linked with low affinity to any CA) and low stability (K(d)=25 nM). Interacts with human NBD1 domain of CFTR. It depends on Ca(2+) as a cofactor. As to expression, expressed by the venom gland.

It localises to the secreted. The catalysed reaction is a 1,2-diacyl-sn-glycero-3-phosphocholine + H2O = a 1-acyl-sn-glycero-3-phosphocholine + a fatty acid + H(+). Heterodimer CA-CB: Crotoxin is a potent presynaptic neurotoxin that possesses phospholipase A2 (PLA2) activity and exerts a lethal action by blocking neuromuscular transmission. It consists of a non-covalent association of a basic and weakly toxic PLA2 subunit (CBa2, CBb, CBc, or CBd), with a small acidic, non-enzymatic and non-toxic subunit (CA1, CA2, CA3 or CA4). The complex acts by binding to a specific 48-kDa protein (R48) receptor located on presynaptic membranes, forming a transient ternary complex CA-CB-R48, followed by dissociation of the CA-CB complex and release of the CA subunit. At equilibrium, only the CB subunits remain associated with the specific crotoxin receptor. In addition to neurotoxicity, crotoxin has been found to exert myotoxicity, nephrotoxicity, and cardiovascular toxicity. Moreover, anti-inflammatory, immunomodulatory, anti-tumor and analgesic effects of crotoxin have also been reported. Its function is as follows. Monomer CBa2: The basic subunit of crotoxin is a snake venom phospholipase A2 (PLA2) that exhibits weak neurotoxicity (10-fold less than the heterodimer) and strong anticoagulant effects by binding to factor Xa (F10) and inhibiting the prothrombinase activity (IC(50) is 41 nM). In addition, it shows the same effects described for the heterodimer and binds the nucleotide-binding domain (NBD1) of CFTR chloride channels and increases the channel current. PLA2 catalyzes the calcium-dependent hydrolysis of the 2-acyl groups in 3-sn-phosphoglycerides. The polypeptide is Phospholipase A2 crotoxin basic chain CBa2 (Crotalus durissus terrificus (South American rattlesnake)).